The following is a 905-amino-acid chain: DNA gyrase subunit A (905 aa).

A Topo IIA-type catalytic domain is found at 35-524 (IPDVRDGLKP…GEFDQDIEDL (490 aa)). The O-(5'-phospho-DNA)-tyrosine intermediate role is filled by Tyr123. Residues 551 to 557 (QKRGGKG) carry the GyrA-box motif. The interval 885 to 905 (TAESEEDSELEEEGLEQSEEV) is disordered. Over residues 886–905 (AESEEDSELEEEGLEQSEEV) the composition is skewed to acidic residues.

Belongs to the type II topoisomerase GyrA/ParC subunit family. As to quaternary structure, heterotetramer, composed of two GyrA and two GyrB chains. In the heterotetramer, GyrA contains the active site tyrosine that forms a transient covalent intermediate with DNA, while GyrB binds cofactors and catalyzes ATP hydrolysis.

It is found in the cytoplasm. The catalysed reaction is ATP-dependent breakage, passage and rejoining of double-stranded DNA.. Functionally, a type II topoisomerase that negatively supercoils closed circular double-stranded (ds) DNA in an ATP-dependent manner to modulate DNA topology and maintain chromosomes in an underwound state. Negative supercoiling favors strand separation, and DNA replication, transcription, recombination and repair, all of which involve strand separation. Also able to catalyze the interconversion of other topological isomers of dsDNA rings, including catenanes and knotted rings. Type II topoisomerases break and join 2 DNA strands simultaneously in an ATP-dependent manner. The protein is DNA gyrase subunit A of Rickettsia conorii (strain ATCC VR-613 / Malish 7).